Here is a 171-residue protein sequence, read N- to C-terminus: Small ribosomal subunit protein uS13 (171 aa).

Positions Met-1–Val-11 are enriched in polar residues. Disordered regions lie at residues Met-1–Glu-24 and Glu-144–Ile-164. The span at Glu-144–Gly-158 shows a compositional bias: basic residues.

This sequence belongs to the universal ribosomal protein uS13 family. As to quaternary structure, part of the 30S ribosomal subunit. Forms a loose heterodimer with protein S19. Forms two bridges to the 50S subunit in the 70S ribosome.

Its function is as follows. Located at the top of the head of the 30S subunit, it contacts several helices of the 16S rRNA. In the 70S ribosome it contacts the 23S rRNA (bridge B1a) and protein L5 of the 50S subunit (bridge B1b), connecting the 2 subunits; these bridges are implicated in subunit movement. The sequence is that of Small ribosomal subunit protein uS13 from Thermoplasma acidophilum (strain ATCC 25905 / DSM 1728 / JCM 9062 / NBRC 15155 / AMRC-C165).